We begin with the raw amino-acid sequence, 85 residues long: Latartoxin-1a (85 aa).

Positions 1-19 are cleaved as a signal peptide; that stretch reads MKVLVFAIVCSVLLQVVLS. Positions 20-25 are cleaved as a propeptide — removed in mature form; it reads ADEEAR. The short motif at 22-25 is the Processing quadruplet motif element; the sequence is EEAR. Cystine bridges form between Cys-27–Cys-42, Cys-34–Cys-47, Cys-41–Cys-64, and Cys-49–Cys-62.

Belongs to the neurotoxin 19 (CSTX) family. Post-translationally, contains 4 disulfide bonds. Cleavage of the propeptide depends on the processing quadruplet motif (XXXR, with at least one of X being E). In terms of tissue distribution, expressed by the venom gland.

Its subcellular location is the secreted. Insect toxin. Causes paralysis in larvae of C.vicina by depolarizing membranes at the neuromuscular junction. The polypeptide is Latartoxin-1a (Lachesana tarabaevi (Spider)).